We begin with the raw amino-acid sequence, 862 residues long: Protein translocase subunit SecA (862 aa).

Residues Gln86, Gly104–Thr108, and Asp499 each bind ATP. Zn(2+) contacts are provided by Cys848, Cys850, Cys859, and His860.

It belongs to the SecA family. Monomer and homodimer. Part of the essential Sec protein translocation apparatus which comprises SecA, SecYEG and auxiliary proteins SecDF-YajC and YidC. Zn(2+) is required as a cofactor.

It localises to the cell inner membrane. It is found in the cytoplasm. The catalysed reaction is ATP + H2O + cellular proteinSide 1 = ADP + phosphate + cellular proteinSide 2.. In terms of biological role, part of the Sec protein translocase complex. Interacts with the SecYEG preprotein conducting channel. Has a central role in coupling the hydrolysis of ATP to the transfer of proteins into and across the cell membrane, serving both as a receptor for the preprotein-SecB complex and as an ATP-driven molecular motor driving the stepwise translocation of polypeptide chains across the membrane. The chain is Protein translocase subunit SecA from Ehrlichia chaffeensis (strain ATCC CRL-10679 / Arkansas).